The sequence spans 70 residues: Protein tam14 (70 aa).

The segment covering 1–19 (MPTVQTPSQRRANTQFQKN) has biased composition (polar residues). Residues 1 to 20 (MPTVQTPSQRRANTQFQKNI) form a disordered region. Residues 45 to 65 (IAMFFILLMSGGIILGILRFL) traverse the membrane as a helical segment.

Belongs to the RAMP4 family.

It localises to the membrane. The protein resides in the endoplasmic reticulum membrane. In terms of biological role, interacts with target proteins during their translocation into the lumen of the endoplasmic reticulum. Protects unfolded target proteins against degradation during ER stress. May facilitate glycosylation of target proteins after termination of ER stress. This chain is Protein tam14 (tam14), found in Schizosaccharomyces pombe (strain 972 / ATCC 24843) (Fission yeast).